We begin with the raw amino-acid sequence, 93 residues long: Putative pterin-4-alpha-carbinolamine dehydratase (93 aa).

The protein belongs to the pterin-4-alpha-carbinolamine dehydratase family.

It carries out the reaction (4aS,6R)-4a-hydroxy-L-erythro-5,6,7,8-tetrahydrobiopterin = (6R)-L-erythro-6,7-dihydrobiopterin + H2O. The chain is Putative pterin-4-alpha-carbinolamine dehydratase from Trichodesmium erythraeum (strain IMS101).